The following is a 42-amino-acid chain: Photosystem I reaction center subunit IX (42 aa).

Residues 7 to 27 traverse the membrane as a helical segment; the sequence is YLSTAPVLAAVWFGFLAGLLI.

It belongs to the PsaJ family.

It localises to the plastid. The protein resides in the chloroplast thylakoid membrane. Functionally, may help in the organization of the PsaE and PsaF subunits. This chain is Photosystem I reaction center subunit IX, found in Nephroselmis olivacea (Green alga).